The sequence spans 464 residues: 3-isopropylmalate dehydratase large subunit (464 aa).

Residues Cys337, Cys397, and Cys400 each coordinate [4Fe-4S] cluster.

The protein belongs to the aconitase/IPM isomerase family. LeuC type 1 subfamily. As to quaternary structure, heterodimer of LeuC and LeuD. [4Fe-4S] cluster serves as cofactor.

The catalysed reaction is (2R,3S)-3-isopropylmalate = (2S)-2-isopropylmalate. The protein operates within amino-acid biosynthesis; L-leucine biosynthesis; L-leucine from 3-methyl-2-oxobutanoate: step 2/4. Catalyzes the isomerization between 2-isopropylmalate and 3-isopropylmalate, via the formation of 2-isopropylmaleate. This chain is 3-isopropylmalate dehydratase large subunit, found in Bacillus cereus (strain AH820).